Here is a 132-residue protein sequence, read N- to C-terminus: Arginine decarboxylase proenzyme (132 aa).

The active-site Schiff-base intermediate with substrate; via pyruvic acid is the S70. Residue S70 is modified to Pyruvic acid (Ser); by autocatalysis. H75 acts as the Proton acceptor; for processing activity in catalysis. C90 acts as the Proton donor; for catalytic activity in catalysis.

Belongs to the prokaryotic AdoMetDC family. Type 1 subfamily. Heterooctamer of four alpha and four beta chains arranged as a tetramer of alpha/beta heterodimers. Pyruvate is required as a cofactor. Is synthesized initially as an inactive proenzyme. Formation of the active enzyme involves a self-maturation process in which the active site pyruvoyl group is generated from an internal serine residue via an autocatalytic post-translational modification. Two non-identical subunits are generated from the proenzyme in this reaction, and the pyruvate is formed at the N-terminus of the alpha chain, which is derived from the carboxyl end of the proenzyme. The post-translation cleavage follows an unusual pathway, termed non-hydrolytic serinolysis, in which the side chain hydroxyl group of the serine supplies its oxygen atom to form the C-terminus of the beta chain, while the remainder of the serine residue undergoes an oxidative deamination to produce ammonia and the pyruvoyl group blocking the N-terminus of the alpha chain.

The catalysed reaction is L-arginine + H(+) = agmatine + CO2. It participates in amine and polyamine biosynthesis; agmatine biosynthesis; agmatine from L-arginine: step 1/1. Specifically catalyzes the decarboxylation of L-arginine to agmatine. Has no S-adenosylmethionine decarboxylase (AdoMetDC) activity. The protein is Arginine decarboxylase proenzyme of Aeropyrum pernix (strain ATCC 700893 / DSM 11879 / JCM 9820 / NBRC 100138 / K1).